The following is a 625-amino-acid chain: Very-long-chain aldehyde decarbonylase CER1 (625 aa).

The next 5 membrane-spanning stretches (helical) occupy residues 45 to 65 (LGYF…QVWI), 126 to 146 (GVLM…YWLH), 177 to 197 (PFAE…TTLL), 200 to 220 (TASI…NNMG), and 329 to 349 (LLWP…RLFV). In terms of domain architecture, Fatty acid hydroxylase spans 138–272 (VEFLYYWLHK…MPLYDYIYGT (135 aa)).

This sequence belongs to the sterol desaturase family. In terms of assembly, homodimer. Interacts with CER3, CYTB5-B, CYTB5-C, CYTB5-D and CYTB5-E. In terms of tissue distribution, expressed in seedlings, stems, leaves, flowers, fruits and siliques. Not detected in roots, pollen and seeds. Expressed in trichomes, cotyledons, shoot apical meristem and leaf primordia. Preferentially associated with young leaves rather than mature leaves. Expressed in the epidermis of the stem and caulines leaves, in the carpels and the sepals.

Its subcellular location is the endoplasmic reticulum membrane. It carries out the reaction a long-chain fatty aldehyde + 2 NADPH + O2 + H(+) = a long-chain alkane + formate + 2 NADP(+) + H2O. Aldehyde decarbonylase involved in the conversion of aldehydes to alkanes. Core component of a very-long-chain alkane synthesis complex. Involved in epicuticular wax biosynthesis and pollen fertility. This is Very-long-chain aldehyde decarbonylase CER1 (CER1) from Arabidopsis thaliana (Mouse-ear cress).